Reading from the N-terminus, the 92-residue chain is UPF0125 protein NMA1005 (92 aa).

Belongs to the UPF0125 (RnfH) family.

In Neisseria meningitidis serogroup A / serotype 4A (strain DSM 15465 / Z2491), this protein is UPF0125 protein NMA1005.